A 322-amino-acid polypeptide reads, in one-letter code: Transaldolase (322 aa).

The Schiff-base intermediate with substrate role is filled by Lys136.

This sequence belongs to the transaldolase family. Type 1 subfamily. In terms of assembly, homodimer.

The protein resides in the cytoplasm. The catalysed reaction is D-sedoheptulose 7-phosphate + D-glyceraldehyde 3-phosphate = D-erythrose 4-phosphate + beta-D-fructose 6-phosphate. It functions in the pathway carbohydrate degradation; pentose phosphate pathway; D-glyceraldehyde 3-phosphate and beta-D-fructose 6-phosphate from D-ribose 5-phosphate and D-xylulose 5-phosphate (non-oxidative stage): step 2/3. Transaldolase is important for the balance of metabolites in the pentose-phosphate pathway. The sequence is that of Transaldolase from Xanthomonas oryzae pv. oryzae (strain KACC10331 / KXO85).